Consider the following 446-residue polypeptide: Glutamate-1-semialdehyde 2,1-aminomutase (446 aa).

Lys264 is subject to N6-(pyridoxal phosphate)lysine.

The protein belongs to the class-III pyridoxal-phosphate-dependent aminotransferase family. HemL subfamily. Requires pyridoxal 5'-phosphate as cofactor.

It is found in the cytoplasm. The catalysed reaction is (S)-4-amino-5-oxopentanoate = 5-aminolevulinate. It functions in the pathway porphyrin-containing compound metabolism; protoporphyrin-IX biosynthesis; 5-aminolevulinate from L-glutamyl-tRNA(Glu): step 2/2. This chain is Glutamate-1-semialdehyde 2,1-aminomutase, found in Natronomonas pharaonis (strain ATCC 35678 / DSM 2160 / CIP 103997 / JCM 8858 / NBRC 14720 / NCIMB 2260 / Gabara) (Halobacterium pharaonis).